Consider the following 583-residue polypeptide: Hyaluronan synthase-related protein (583 aa).

The Cytoplasmic segment spans residues 1-29 (MENTTDPENIPVSKPKYPTIRRILSQTFR). Residues 30 to 50 (ILLLFSITTAYVLGYQALCHQ) traverse the membrane as a helical segment. Residues 51-52 (GL) are Extracellular-facing. A helical transmembrane segment spans residues 53 to 73 (LITFGLYGAAMLLHLLMQGIF). The Cytoplasmic segment spans residues 74-393 (ANLEIRRIEK…CNAQWWHQHH (320 aa)). The helical transmembrane segment at 394-414 (IWMTYESATGIFFPFFVTAVL) threads the bilayer. Residues 415–425 (IRLMYSSSLCN) are Extracellular-facing. Residues 426–446 (IVWLFLCIQIMSLLLSLYASW) traverse the membrane as a helical segment. Topologically, residues 447–457 (QSKKLSMVLMS) are cytoplasmic. The helical transmembrane segment at 458 to 478 (LYSTLYIIWLLPCQLVALLTI) threads the bilayer. The Extracellular segment spans residues 479–497 (AKSDWGTSGRKKVVNNYVP). Residues 498-518 (LFSLSIWAAVLLGGLCYSMYI) traverse the membrane as a helical segment. Residues 519–535 (GCRKDWSKPQANRELYH) lie on the Cytoplasmic side of the membrane. Residues 536 to 556 (LLYGCAGYMAYWVLMTVIYCV) form a helical membrane-spanning segment. The Extracellular segment spans residues 557-583 (SGSCCKMRSQAVPQTHDITSLSVSLLV).

This sequence belongs to the NodC/HAS family.

It is found in the membrane. The protein is Hyaluronan synthase-related protein (has-rs) of Xenopus laevis (African clawed frog).